We begin with the raw amino-acid sequence, 208 residues long: MRKIRTKICGITTPEDALYAAHAGADALGLVFYPQSPRAIDIIKAQKIAAALPPFVSVVALFINESAQNIRRILAEVPIHIIQFHGDEDDAFCRQFDRPYIKAIRVQTASDIRNAATRFPNAQALLFDAYHPSEYGGTGHRFDWTLLAEYSGKPWVLAGGLTPENVGEAVRITGAEAVDVSGGVEASKGKKDPAKVAAFIATANRLSR.

The protein belongs to the TrpF family.

The catalysed reaction is N-(5-phospho-beta-D-ribosyl)anthranilate = 1-(2-carboxyphenylamino)-1-deoxy-D-ribulose 5-phosphate. The protein operates within amino-acid biosynthesis; L-tryptophan biosynthesis; L-tryptophan from chorismate: step 3/5. The sequence is that of N-(5'-phosphoribosyl)anthranilate isomerase from Neisseria gonorrhoeae (strain NCCP11945).